Here is a 543-residue protein sequence, read N- to C-terminus: Hydroxylamine reductase (543 aa).

Cys-3, Cys-6, Cys-15, and Cys-21 together coordinate [4Fe-4S] cluster. Hybrid [4Fe-2O-2S] cluster contacts are provided by His-239, Glu-263, Cys-307, Cys-398, Cys-426, Cys-451, Glu-486, and Lys-488. Cys-398 is modified (cysteine persulfide).

Belongs to the HCP family. Requires [4Fe-4S] cluster as cofactor. It depends on hybrid [4Fe-2O-2S] cluster as a cofactor.

The protein resides in the cytoplasm. It catalyses the reaction A + NH4(+) + H2O = hydroxylamine + AH2 + H(+). Catalyzes the reduction of hydroxylamine to form NH(3) and H(2)O. This chain is Hydroxylamine reductase, found in Methanococcus vannielii (strain ATCC 35089 / DSM 1224 / JCM 13029 / OCM 148 / SB).